Reading from the N-terminus, the 259-residue chain is HTH-type quorum sensing-dependent transcriptional regulator VjbR (259 aa).

The interval 76 to 179 (KNYFAIDPVF…AGIIHGTVCG (104 aa)) is C12-HSL binding. Positions 183 to 248 (ANSVASLLTP…SAVATALSLG (66 aa)) constitute an HTH luxR-type domain. A DNA-binding region (H-T-H motif) is located at residues 207–226 (DGEIAEILSIARWTVVTYLQ).

Its function is as follows. Transcriptional regulator involved in the global control of Brucella gene expression. Mediates the effects of the quorum sensing autoinducer C12-HSL (N-dodecanoyl-homoserine lactone) on a large and diverse number of genes. In Brucella suis biovar 1 (strain 1330), this protein is HTH-type quorum sensing-dependent transcriptional regulator VjbR (vjbR).